Here is a 588-residue protein sequence, read N- to C-terminus: Adenine deaminase (588 aa).

Belongs to the metallo-dependent hydrolases superfamily. Adenine deaminase family. In terms of assembly, homodimer. Mn(2+) is required as a cofactor.

It carries out the reaction adenine + H2O + H(+) = hypoxanthine + NH4(+). This chain is Adenine deaminase, found in Escherichia coli O157:H7 (strain EC4115 / EHEC).